The sequence spans 1875 residues: Soluble starch synthase 3a, chloroplastic/amyloplastic (1875 aa).

The N-terminal 49 residues, 1 to 49 (MEMALRPQSLLCPRSRLKVVIRPASSASGGGLAQYFLMTRRYTGSRIVR), are a transit peptide targeting the chloroplast. Residues 1007-1065 (KRELERVATEEAERRRHAEEQQRMGEQRAAEQAAREQAKKEIELKKNKLQNLLSSARTH) adopt a coiled-coil conformation. A disordered region spans residues 1014–1043 (ATEEAERRRHAEEQQRMGEQRAAEQAAREQ).

It belongs to the glycosyltransferase 1 family. Bacterial/plant glycogen synthase subfamily. In terms of tissue distribution, expressed in the endosperm.

The protein resides in the plastid. It is found in the chloroplast. It localises to the amyloplast. The enzyme catalyses [(1-&gt;4)-alpha-D-glucosyl](n) + ADP-alpha-D-glucose = [(1-&gt;4)-alpha-D-glucosyl](n+1) + ADP + H(+). It functions in the pathway glycan biosynthesis; starch biosynthesis. Functionally, involved in starch synthesis in endosperm amyloplasts. Plays an important role in the elongation of amylopectin B chains. The protein is Soluble starch synthase 3a, chloroplastic/amyloplastic of Oryza sativa subsp. japonica (Rice).